Reading from the N-terminus, the 143-residue chain is Nucleoside diphosphate kinase (143 aa).

Residues Lys-11, Phe-59, Arg-87, Thr-93, Arg-104, and Asn-114 each contribute to the ATP site. Catalysis depends on His-117, which acts as the Pros-phosphohistidine intermediate.

Belongs to the NDK family. Homotetramer. Mg(2+) serves as cofactor.

The protein localises to the cytoplasm. The enzyme catalyses a 2'-deoxyribonucleoside 5'-diphosphate + ATP = a 2'-deoxyribonucleoside 5'-triphosphate + ADP. It carries out the reaction a ribonucleoside 5'-diphosphate + ATP = a ribonucleoside 5'-triphosphate + ADP. Its function is as follows. Major role in the synthesis of nucleoside triphosphates other than ATP. The ATP gamma phosphate is transferred to the NDP beta phosphate via a ping-pong mechanism, using a phosphorylated active-site intermediate. This Escherichia coli O81 (strain ED1a) protein is Nucleoside diphosphate kinase.